Consider the following 611-residue polypeptide: Glutamine--fructose-6-phosphate aminotransferase [isomerizing] (611 aa).

The active-site Nucleophile; for GATase activity is C2. A Glutamine amidotransferase type-2 domain is found at 2–219 (CGIVGAVAER…EGDIAEIRRD (218 aa)). 2 consecutive SIS domains span residues 287–427 (AAEL…VKGS) and 460–601 (VAEL…VDQP). The active-site For Fru-6P isomerization activity is the K606.

Homodimer.

It localises to the cytoplasm. It catalyses the reaction D-fructose 6-phosphate + L-glutamine = D-glucosamine 6-phosphate + L-glutamate. In terms of biological role, catalyzes the first step in hexosamine metabolism, converting fructose-6P into glucosamine-6P using glutamine as a nitrogen source. The protein is Glutamine--fructose-6-phosphate aminotransferase [isomerizing] of Pseudomonas syringae pv. tomato (strain ATCC BAA-871 / DC3000).